The sequence spans 339 residues: Deubiquitinase and deneddylase Dub2 (339 aa).

The chain crosses the membrane as a helical span at residues 36–56 (IIIALFLIVISCGLILCAYTF). Active-site residues include His-203, Asp-220, and Cys-282.

This sequence belongs to the peptidase C48 family.

It is found in the secreted. Its subcellular location is the host cell. It localises to the membrane. Its function is as follows. Effector proteins function to alter host cell physiology and promote bacterial survival in host tissues. This protease possesses deubiquitinating and deneddylating activities. This chain is Deubiquitinase and deneddylase Dub2 (cdu2), found in Chlamydia trachomatis serovar B (strain Jali20/OT).